The primary structure comprises 501 residues: Actin nucleation-promoting factor WASL (501 aa).

Ser-2 carries the N-acetylserine modification. Residues 31–138 (LGKKCVTMSS…KAVTDLLGRR (108 aa)) form the WH1 domain. 2 disordered regions span residues 135-158 (LGRRQRKSEKRRDAPNGPNLPMAT) and 180-202 (SHTKEKKKGKAKKKRLTKADIGT). Residues 183-195 (KEKKKGKAKKKRL) show a composition bias toward basic residues. The CRIB domain occupies 200-213 (IGTPSNFQHIGHVG). Phosphoserine; by TNK2 is present on Ser-239. Tyr-253 is modified (phosphotyrosine; by FAK1 and TNK2). 2 disordered regions span residues 263-405 (EAVK…KAAL) and 442-501 (QLKS…EWED). 2 stretches are compositionally biased toward pro residues: residues 273–361 (APPP…PPPL) and 368–387 (APPPPPPPPPPPGPPPPPGL). The residue at position 304 (Arg-304) is an Omega-N-methylarginine. 2 WH2 domains span residues 401–418 (NKAALLDQIREGAQLKKV) and 429–446 (GRDALLDQIRQGIQLKSV). The span at 442–453 (QLKSVSDGQEST) shows a compositional bias: polar residues. 2 positions are modified to phosphoserine: Ser-480 and Ser-481. A compositionally biased stretch (acidic residues) spans 482–501 (DEDEDDDDEEDFQDDDEWED).

In terms of assembly, binds actin and the Arp2/3 complex. Interacts with CDC42. Interacts with FCHSD1. Interacts with FCHSD2. Binds to SH3 domains of GRB2. Interacts with the C-terminal SH3 domain of DNMBP. Interacts with SNX9. Interacts with the WW domains of PRPF40A/FBP11. Interacts with PTK2/FAK1. Interacts with PACSIN1, PACSIN2 and PACSIN3. Interacts with NOSTRIN. Binds to TNK2. Interacts with SNX33. Interacts with NONO (via second RRM domain); the interaction is direct. Component of a multiprotein complex with NONO and SFPQ; associates with the complex via direct interaction with NONO. In terms of processing, phosphorylation at Ser-239, Tyr-253, Ser-480 and Ser-481 enhances actin polymerization activity.

It is found in the cytoplasm. The protein resides in the cytoskeleton. It localises to the nucleus. In terms of biological role, regulates actin polymerization by stimulating the actin-nucleating activity of the Arp2/3 complex. Involved in various processes, such as mitosis and cytokinesis, via its role in the regulation of actin polymerization. Together with CDC42, involved in the extension and maintenance of the formation of thin, actin-rich surface projections called filopodia. In addition to its role in the cytoplasm, also plays a role in the nucleus by regulating gene transcription, probably by promoting nuclear actin polymerization. Binds to HSF1/HSTF1 and forms a complex on heat shock promoter elements (HSE) that negatively regulates HSP90 expression. Plays a role in dendrite spine morphogenesis. This Rattus norvegicus (Rat) protein is Actin nucleation-promoting factor WASL (Wasl).